Here is a 103-residue protein sequence, read N- to C-terminus: Large ribosomal subunit protein bL21 (103 aa).

This sequence belongs to the bacterial ribosomal protein bL21 family. In terms of assembly, part of the 50S ribosomal subunit. Contacts protein L20.

This protein binds to 23S rRNA in the presence of protein L20. The chain is Large ribosomal subunit protein bL21 from Desulfotalea psychrophila (strain LSv54 / DSM 12343).